A 466-amino-acid chain; its full sequence is Ras-GEF domain-containing family member 1C (466 aa).

Disordered regions lie at residues Met-1–Asp-35 and Ser-443–Thr-466. In terms of domain architecture, N-terminal Ras-GEF spans Leu-34 to Ala-164. The 247-residue stretch at Asp-200–Pro-446 folds into the Ras-GEF domain.

Its function is as follows. Guanine nucleotide exchange factor (GEF). The protein is Ras-GEF domain-containing family member 1C (Rasgef1c) of Mus musculus (Mouse).